A 64-amino-acid polypeptide reads, in one-letter code: Alpha-mammal toxin Lqh2 (64 aa).

The region spanning 2–64 is the LCN-type CS-alpha/beta domain; it reads KDGYIVDDVN…VRTKGPGRCR (63 aa). 4 disulfide bridges follow: Cys-12-Cys-63, Cys-16-Cys-36, Cys-22-Cys-46, and Cys-26-Cys-48. At Arg-64 the chain carries Arginine amide.

Belongs to the long (4 C-C) scorpion toxin superfamily. Sodium channel inhibitor family. Alpha subfamily. Expressed by the venom gland.

It is found in the secreted. Alpha toxins bind voltage-independently at site-3 of sodium channels (Nav) and inhibit the inactivation of the activated channels, thereby blocking neuronal transmission. The dissociation is voltage-dependent. Is active on mammals and competes for alpha-toxins binding on both mammalian and cockroach sodium channels. The protein is Alpha-mammal toxin Lqh2 of Leiurus hebraeus (Hebrew deathstalker scorpion).